A 176-amino-acid chain; its full sequence is Ribosome maturation factor RimM (176 aa).

Positions 100–173 constitute a PRC barrel domain; it reads KDEYHYHDLI…WLLINPPPGL (74 aa).

This sequence belongs to the RimM family. In terms of assembly, binds ribosomal protein uS19.

It is found in the cytoplasm. In terms of biological role, an accessory protein needed during the final step in the assembly of 30S ribosomal subunit, possibly for assembly of the head region. Essential for efficient processing of 16S rRNA. May be needed both before and after RbfA during the maturation of 16S rRNA. It has affinity for free ribosomal 30S subunits but not for 70S ribosomes. This chain is Ribosome maturation factor RimM, found in Prochlorococcus marinus (strain NATL2A).